Here is a 746-residue protein sequence, read N- to C-terminus: NAD(P)H-quinone oxidoreductase subunit 5, chloroplastic (746 aa).

Transmembrane regions (helical) follow at residues 9–29 (WIIP…LLLF), 40–60 (WTFL…YLSI), 89–109 (IDPL…LVLI), 125–145 (FAYL…SNLI), 147–167 (VYFF…FWFT), 185–205 (GDFG…SFEF), 221–241 (VNLL…IAKS), 258–278 (TPIS…FLVA), 280–300 (LLPL…IGII), 327–347 (LGYM…FHLI), 354–374 (ALLF…VGYS), 396–416 (TAFL…WFWS), 425–445 (LLFS…TAFY), 547–567 (ILFP…IGIP), 608–628 (FSVS…KPFY), and 722–742 (FYLF…FFFY).

This sequence belongs to the complex I subunit 5 family. NDH is composed of at least 16 different subunits, 5 of which are encoded in the nucleus.

Its subcellular location is the plastid. The protein localises to the chloroplast thylakoid membrane. It carries out the reaction a plastoquinone + NADH + (n+1) H(+)(in) = a plastoquinol + NAD(+) + n H(+)(out). The catalysed reaction is a plastoquinone + NADPH + (n+1) H(+)(in) = a plastoquinol + NADP(+) + n H(+)(out). NDH shuttles electrons from NAD(P)H:plastoquinone, via FMN and iron-sulfur (Fe-S) centers, to quinones in the photosynthetic chain and possibly in a chloroplast respiratory chain. The immediate electron acceptor for the enzyme in this species is believed to be plastoquinone. Couples the redox reaction to proton translocation, and thus conserves the redox energy in a proton gradient. In Draba nemorosa (Woodland whitlowgrass), this protein is NAD(P)H-quinone oxidoreductase subunit 5, chloroplastic (ndhF).